The sequence spans 72 residues: Putative membrane protein insertion efficiency factor (72 aa).

Belongs to the UPF0161 family.

The protein resides in the cell inner membrane. In terms of biological role, could be involved in insertion of integral membrane proteins into the membrane. The sequence is that of Putative membrane protein insertion efficiency factor from Myxococcus xanthus (strain DK1622).